The following is a 753-amino-acid chain: 5-methyltetrahydropteroyltriglutamate--homocysteine methyltransferase (753 aa).

5-methyltetrahydropteroyltri-L-glutamate-binding positions include 17–20 and K117; that span reads RELK. Residues 431–433 and E484 each bind L-homocysteine; that span reads IGS. L-methionine-binding positions include 431–433 and E484; that span reads IGS. Residues 515 to 516 and W561 each bind 5-methyltetrahydropteroyltri-L-glutamate; that span reads RC. D599 serves as a coordination point for L-homocysteine. An L-methionine-binding site is contributed by D599. E605 contacts 5-methyltetrahydropteroyltri-L-glutamate. Zn(2+) is bound by residues H641, C643, and E665. The active-site Proton donor is H694. C726 serves as a coordination point for Zn(2+).

It belongs to the vitamin-B12 independent methionine synthase family. Zn(2+) serves as cofactor.

It carries out the reaction 5-methyltetrahydropteroyltri-L-glutamate + L-homocysteine = tetrahydropteroyltri-L-glutamate + L-methionine. It functions in the pathway amino-acid biosynthesis; L-methionine biosynthesis via de novo pathway; L-methionine from L-homocysteine (MetE route): step 1/1. Catalyzes the transfer of a methyl group from 5-methyltetrahydrofolate to homocysteine resulting in methionine formation. The chain is 5-methyltetrahydropteroyltriglutamate--homocysteine methyltransferase from Escherichia coli (strain SMS-3-5 / SECEC).